The following is a 397-amino-acid chain: Acetate kinase (397 aa).

Asn-7 contacts Mg(2+). Lys-14 is a binding site for ATP. Position 90 (Arg-90) interacts with substrate. The active-site Proton donor/acceptor is the Asp-147. Residues 207–211 (HLGNG), 282–284 (DFR), and 330–334 (GLGEN) contribute to the ATP site. Position 383 (Glu-383) interacts with Mg(2+).

Belongs to the acetokinase family. As to quaternary structure, homodimer. Requires Mg(2+) as cofactor. The cofactor is Mn(2+).

The protein resides in the cytoplasm. The enzyme catalyses acetate + ATP = acetyl phosphate + ADP. Its pathway is metabolic intermediate biosynthesis; acetyl-CoA biosynthesis; acetyl-CoA from acetate: step 1/2. Catalyzes the formation of acetyl phosphate from acetate and ATP. Can also catalyze the reverse reaction. In Clostridium botulinum (strain Loch Maree / Type A3), this protein is Acetate kinase.